The primary structure comprises 425 residues: MEVKELERDKNRVVLEYVFGAEEIAQAEDKAVRYLNQRVEIPGFRKGRIPKNVLKMKLGEEFQEYTLDFLMDLIPDTLKDRKLILSPIVTERELKDVTARVVVEVHEEPEVRIGDISKIEVEKVDEEKVLEKYVERRIEDLRESHALLEPKEGPAEAGDLVRVNMEVYNEEGKKLTSREYEYVISEDEDRPFVKDLVGKKKGDVVEIEREYEGKKYTYKLEVEEVYKRTLPEIGDELAKSVNNEFETLEQLKESLKKEGKEIYDVEMKESMREQLLEKLPEIVEIEISDRTLEILVNEAINRLKREGRYEQIVSSYESEEKFREELKERILDDIKRDRVIEVLAQEKGISVNDEELEKEAEELAPFWGISPDRAKSLVKARQDLREELRWAILKRKVLDLLLQEVKVKVVEPKGEGDDSEGKEDN.

One can recognise a PPIase FKBP-type domain in the interval 158-231; sequence GDLVRVNMEV…VEEVYKRTLP (74 aa).

Belongs to the FKBP-type PPIase family. Tig subfamily.

Its subcellular location is the cytoplasm. It carries out the reaction [protein]-peptidylproline (omega=180) = [protein]-peptidylproline (omega=0). Involved in protein export. Acts as a chaperone by maintaining the newly synthesized protein in an open conformation. Functions as a peptidyl-prolyl cis-trans isomerase. The polypeptide is Trigger factor (tig) (Thermotoga maritima (strain ATCC 43589 / DSM 3109 / JCM 10099 / NBRC 100826 / MSB8)).